The primary structure comprises 164 residues: Transcriptional repressor NrdR (164 aa).

The segment at Cys3–Cys34 is a zinc-finger region. The region spanning Leu46–Asp136 is the ATP-cone domain.

Belongs to the NrdR family. Zn(2+) is required as a cofactor.

Negatively regulates transcription of bacterial ribonucleotide reductase nrd genes and operons by binding to NrdR-boxes. This chain is Transcriptional repressor NrdR, found in Micrococcus luteus (strain ATCC 4698 / DSM 20030 / JCM 1464 / CCM 169 / CCUG 5858 / IAM 1056 / NBRC 3333 / NCIMB 9278 / NCTC 2665 / VKM Ac-2230) (Micrococcus lysodeikticus).